The primary structure comprises 556 residues: Glycosyl hydrolase 5 family protein (556 aa).

Positions 1 to 28 (MTSAGVAPTALRLLTALLLLLVAAPSHS) are cleaved as a signal peptide. N-linked (GlcNAc...) asparagine glycosylation is found at asparagine 102 and asparagine 113. Glutamate 208 serves as the catalytic Proton donor/acceptor. Residues asparagine 212, asparagine 290, and asparagine 307 are each glycosylated (N-linked (GlcNAc...) asparagine). Residue glutamate 473 is the Nucleophile of the active site. N-linked (GlcNAc...) asparagine glycans are attached at residues asparagine 474 and asparagine 479.

This sequence belongs to the glycosyl hydrolase 5 (cellulase A) family. Post-translationally, glycosylated.

Functionally, may have glycosyl hydrolase activity. The sequence is that of Glycosyl hydrolase 5 family protein from Chamaecyparis obtusa (Hinoki false-cypress).